The chain runs to 302 residues: Phosphatidylglycerol--prolipoprotein diacylglyceryl transferase (302 aa).

Helical transmembrane passes span 19–39 (FGPL…LLGW), 67–87 (LVLW…FVFY), 108–128 (IWEG…AIIL), 143–163 (LIAP…FING), 203–223 (QLYE…FAIY), 232–252 (GALV…LENV), and 264–284 (LGLT…GWLL). Residue Arg156 coordinates a 1,2-diacyl-sn-glycero-3-phospho-(1'-sn-glycerol).

It belongs to the Lgt family.

Its subcellular location is the cell inner membrane. The catalysed reaction is L-cysteinyl-[prolipoprotein] + a 1,2-diacyl-sn-glycero-3-phospho-(1'-sn-glycerol) = an S-1,2-diacyl-sn-glyceryl-L-cysteinyl-[prolipoprotein] + sn-glycerol 1-phosphate + H(+). It functions in the pathway protein modification; lipoprotein biosynthesis (diacylglyceryl transfer). Functionally, catalyzes the transfer of the diacylglyceryl group from phosphatidylglycerol to the sulfhydryl group of the N-terminal cysteine of a prolipoprotein, the first step in the formation of mature lipoproteins. The sequence is that of Phosphatidylglycerol--prolipoprotein diacylglyceryl transferase from Caulobacter vibrioides (strain ATCC 19089 / CIP 103742 / CB 15) (Caulobacter crescentus).